Consider the following 776-residue polypeptide: Glucocorticoid receptor (776 aa).

Polar residues predominate over residues 1-11 (MDSKESLTSPS). Positions 1–25 (MDSKESLTSPSEEIPSSVHGQERGN) are disordered. Residues 1-419 (MDSKESLTSP…LSAVGPPPKF (419 aa)) are modulating. A Phosphothreonine modification is found at Thr-8. Arg-23 is subject to Omega-N-methylarginine. Residues Ser-45, Ser-113, and Ser-134 each carry the phosphoserine modification. Residues 157-178 (PETPSDVSSEQQNLKGQTGTNG) form a disordered region. Over residues 161–174 (SDVSSEQQNLKGQT) the composition is skewed to polar residues. Phosphoserine occurs at positions 203, 211, and 226. Lys-258 participates in a covalent cross-link: Glycyl lysine isopeptide (Lys-Gly) (interchain with G-Cter in SUMO2). Position 267 is a phosphoserine (Ser-267). Residues Lys-277 and Lys-293 each participate in a glycyl lysine isopeptide (Lys-Gly) (interchain with G-Cter in SUMO); alternate cross-link. Residues Lys-277 and Lys-293 each participate in a glycyl lysine isopeptide (Lys-Gly) (interchain with G-Cter in SUMO2); alternate cross-link. Residues Ser-307 and Ser-404 each carry the phosphoserine modification. A DNA-binding region (nuclear receptor) is located at residues 417 to 492 (PKFCLVCSDE…AGMNLEARKT (76 aa)). Residue Lys-418 forms a Glycyl lysine isopeptide (Lys-Gly) (interchain with G-Cter in ubiquitin) linkage. 2 consecutive NR C4-type zinc fingers follow at residues 420–440 (CLVC…CGSC) and 456–480 (CAGR…YRKC). Residues Lys-479, Lys-491, Lys-493, and Lys-494 each carry the N6-acetyllysine modification. The tract at residues 484 to 776 (GMNLEARKTK…NIKKLLFHQK (293 aa)) is interaction with CLOCK. Residues 486-522 (NLEARKTKKKIKGIQQTTTGISQETPENSANKTIVPA) are hinge. Residues 523-757 (TLPQLTPTPV…FPEMLAEIIT (235 aa)) form the NR LBD domain. The segment at 531–696 (PVSLLEVIEP…EIRMTYIKEL (166 aa)) is interaction with CRY1. Lys-702 is covalently cross-linked (Glycyl lysine isopeptide (Lys-Gly) (interchain with G-Cter in SUMO)).

Belongs to the nuclear hormone receptor family. NR3 subfamily. Heteromultimeric cytoplasmic complex with HSP90AA1, HSPA1A/HSPA1B, and FKBP5 or another immunophilin such as PPID, STIP1, or the immunophilin homolog PPP5C. Upon ligand binding FKBP5 dissociates from the complex and FKBP4 takes its place, thereby linking the complex to dynein and mediating transport to the nucleus, where the complex dissociates. Probably forms a complex composed of chaperones HSP90 and HSP70, co-chaperones CDC37, PPP5C, TSC1 and client protein TSC2, CDK4, AKT, RAF1 and NR3C1; this complex does not contain co-chaperones STIP1/HOP and PTGES3/p23. Directly interacts with UNC45A. Binds to DNA as a homodimer, and as heterodimer with NR3C2 or the retinoid X receptor. Binds STAT5A and STAT5B homodimers and heterodimers. Interacts with NRIP1, POU2F1, POU2F2 and TRIM28. Interacts with several coactivator complexes, including the SMARCA4 complex, CREBBP/EP300, TADA2L (Ada complex) and p160 coactivators such as NCOA2 and NCOA6. Interaction with BAG1 inhibits transactivation. Interacts with HEXIM1 and TGFB1I1. Interacts with NCOA1. Interacts with NCOA3, SMARCA4, SMARCC1, SMARCD1, and SMARCE1. Interacts with CLOCK, CRY1 and CRY2 in a ligand-dependent fashion. Interacts with CIART. Interacts with RWDD3. Interacts with UBE2I/UBC9 and this interaction is enhanced in the presence of RWDD3. Interacts with GRIP1. Interacts with NR4A3 (via nuclear receptor DNA-binding domain), represses transcription activity of NR4A3 on the POMC promoter Nur response element (NurRE). Directly interacts with PNRC2 to attract and form a complex with UPF1 and DCP1A; the interaction leads to rapid mRNA degradation. Interacts with GSK3B. Interacts with FNIP1 and FNIP2. Interacts (via C-terminus) with NR3C1 (via C-terminus). Interacts with MCM3AP. Interacts (via domain NR LBD) with HSP90AA1 and HSP90AB1. In the absence of hormonal ligand, interacts with TACC1. In terms of processing, acetylation by CLOCK reduces its binding to glucocorticoid response elements and its transcriptional activity. Post-translationally, increased proteasome-mediated degradation in response to glucocorticoids. Phosphorylated in the absence of hormone; becomes hyperphosphorylated in the presence of glucocorticoid. The Ser-203, Ser-226 and Ser-404-phosphorylated forms are mainly cytoplasmic, and the Ser-211-phosphorylated form is nuclear. Phosphorylation at Ser-211 increases transcriptional activity. Phosphorylation at Ser-203, Ser-226 and Ser-404 decreases signaling capacity. Phosphorylation at Ser-404 may protect from glucocorticoid-induced apoptosis. Phosphorylation at Ser-203 and Ser-211 is not required in regulation of chromosome segregation. May be dephosphorylated by PPP5C, attenuates NR3C1 action. In terms of processing, sumoylation at Lys-277 and Lys-293 negatively regulates its transcriptional activity. Sumoylation at Lys-702 positively regulates its transcriptional activity in the presence of RWDD3. Sumoylation at Lys-277 and Lys-293 is dispensable whereas sumoylation at Lys-702 is critical for the stimulatory effect of RWDD3 on its transcriptional activity. Heat shock increases sumoylation in a RWDD3-dependent manner. Post-translationally, ubiquitinated by UBR5, leading to its degradation: UBR5 specifically recognizes and binds ligand-bound NR3C1 when it is not associated with coactivators (NCOAs). In presence of NCOAs, the UBR5-degron is not accessible, preventing its ubiquitination and degradation.

It is found in the cytoplasm. It localises to the nucleus. Its subcellular location is the mitochondrion. The protein localises to the cytoskeleton. The protein resides in the spindle. It is found in the microtubule organizing center. It localises to the centrosome. Its subcellular location is the chromosome. The protein localises to the nucleoplasm. Its function is as follows. Receptor for glucocorticoids (GC). Has a dual mode of action: as a transcription factor that binds to glucocorticoid response elements (GRE), both for nuclear and mitochondrial DNA, and as a modulator of other transcription factors. Affects inflammatory responses, cellular proliferation and differentiation in target tissues. Involved in chromatin remodeling. Plays a role in rapid mRNA degradation by binding to the 5' UTR of target mRNAs and interacting with PNRC2 in a ligand-dependent manner which recruits the RNA helicase UPF1 and the mRNA-decapping enzyme DCP1A, leading to RNA decay. Could act as a coactivator for STAT5-dependent transcription upon growth hormone (GH) stimulation and could reveal an essential role of hepatic GR in the control of body growth. Mediates glucocorticoid-induced apoptosis. Promotes accurate chromosome segregation during mitosis. May act as a tumor suppressor. May play a negative role in adipogenesis through the regulation of lipolytic and antilipogenic gene expression. The chain is Glucocorticoid receptor (NR3C1) from Tupaia belangeri (Common tree shrew).